A 186-amino-acid chain; its full sequence is dCTP deaminase (186 aa).

107–112 (KSTYAR) provides a ligand contact to dCTP. Residue glutamate 133 is the Proton donor/acceptor of the active site. DCTP is bound by residues glutamine 152, tyrosine 166, and glutamine 176.

The protein belongs to the dCTP deaminase family. In terms of assembly, homotrimer.

The enzyme catalyses dCTP + H2O + H(+) = dUTP + NH4(+). The protein operates within pyrimidine metabolism; dUMP biosynthesis; dUMP from dCTP (dUTP route): step 1/2. Its function is as follows. Catalyzes the deamination of dCTP to dUTP. This chain is dCTP deaminase, found in Campylobacter jejuni subsp. doylei (strain ATCC BAA-1458 / RM4099 / 269.97).